The primary structure comprises 172 residues: Translation initiation factor IF-3 (172 aa).

This sequence belongs to the IF-3 family. Monomer.

Its subcellular location is the cytoplasm. IF-3 binds to the 30S ribosomal subunit and shifts the equilibrium between 70S ribosomes and their 50S and 30S subunits in favor of the free subunits, thus enhancing the availability of 30S subunits on which protein synthesis initiation begins. In Sulfurimonas denitrificans (strain ATCC 33889 / DSM 1251) (Thiomicrospira denitrificans (strain ATCC 33889 / DSM 1251)), this protein is Translation initiation factor IF-3.